The chain runs to 119 residues: Ribonuclease P protein component (119 aa).

Belongs to the RnpA family. In terms of assembly, consists of a catalytic RNA component (M1 or rnpB) and a protein subunit.

The catalysed reaction is Endonucleolytic cleavage of RNA, removing 5'-extranucleotides from tRNA precursor.. Functionally, RNaseP catalyzes the removal of the 5'-leader sequence from pre-tRNA to produce the mature 5'-terminus. It can also cleave other RNA substrates such as 4.5S RNA. The protein component plays an auxiliary but essential role in vivo by binding to the 5'-leader sequence and broadening the substrate specificity of the ribozyme. In Sodalis glossinidius (strain morsitans), this protein is Ribonuclease P protein component.